A 452-amino-acid polypeptide reads, in one-letter code: Bifunctional protein GlmU (452 aa).

The segment at Met-1–Lys-226 is pyrophosphorylase. UDP-N-acetyl-alpha-D-glucosamine-binding positions include Leu-9–Gly-12, Lys-23, Gln-73, Gly-78–Thr-79, Tyr-100–Asp-102, Gly-137, Glu-151, Asn-166, and Asn-224. Asp-102 contributes to the Mg(2+) binding site. Mg(2+) is bound at residue Asn-224. Positions Val-227–Gln-247 are linker. An N-acetyltransferase region spans residues Gly-248–Lys-452. Positions 330 and 348 each coordinate UDP-N-acetyl-alpha-D-glucosamine. The Proton acceptor role is filled by His-360. UDP-N-acetyl-alpha-D-glucosamine is bound by residues Tyr-363 and Asn-374. Acetyl-CoA is bound by residues Ala-377, Asn-383–Tyr-384, Ser-402, Ala-420, and Arg-437.

The protein in the N-terminal section; belongs to the N-acetylglucosamine-1-phosphate uridyltransferase family. It in the C-terminal section; belongs to the transferase hexapeptide repeat family. Homotrimer. Mg(2+) is required as a cofactor.

The protein resides in the cytoplasm. The catalysed reaction is alpha-D-glucosamine 1-phosphate + acetyl-CoA = N-acetyl-alpha-D-glucosamine 1-phosphate + CoA + H(+). It carries out the reaction N-acetyl-alpha-D-glucosamine 1-phosphate + UTP + H(+) = UDP-N-acetyl-alpha-D-glucosamine + diphosphate. Its pathway is nucleotide-sugar biosynthesis; UDP-N-acetyl-alpha-D-glucosamine biosynthesis; N-acetyl-alpha-D-glucosamine 1-phosphate from alpha-D-glucosamine 6-phosphate (route II): step 2/2. The protein operates within nucleotide-sugar biosynthesis; UDP-N-acetyl-alpha-D-glucosamine biosynthesis; UDP-N-acetyl-alpha-D-glucosamine from N-acetyl-alpha-D-glucosamine 1-phosphate: step 1/1. It participates in bacterial outer membrane biogenesis; LPS lipid A biosynthesis. Functionally, catalyzes the last two sequential reactions in the de novo biosynthetic pathway for UDP-N-acetylglucosamine (UDP-GlcNAc). The C-terminal domain catalyzes the transfer of acetyl group from acetyl coenzyme A to glucosamine-1-phosphate (GlcN-1-P) to produce N-acetylglucosamine-1-phosphate (GlcNAc-1-P), which is converted into UDP-GlcNAc by the transfer of uridine 5-monophosphate (from uridine 5-triphosphate), a reaction catalyzed by the N-terminal domain. This chain is Bifunctional protein GlmU, found in Ruthia magnifica subsp. Calyptogena magnifica.